Here is a 509-residue protein sequence, read N- to C-terminus: MEDIQTNAELKSTQEQSVPAESAAVLNDYSLTKSHEMENVDSGEGPANEDEDIGDDSMKVKDEYSERDENVLKSEPMGNAEEPEIPYSYSREYNEYENIKLERHVVSFDSSRPTSGKMNCDVCGLSCISFNVLMVHKRSHTGERPFQCNQCGASFTQKGNLLRHIKLHTGEKPFKCHLCNYACQRRDALTGHLRTHSVEKPYKCEFCGRSYKQRSSLEEHKERCRTFLQSTDPGDTASAEARHIKAEMGSERALVLDRLASNVAKRKSSMPQKFIGEKRHCFDVNYNSSYMYEKESELIQTRMMDQAINNAISYLGAEALRPLVQTPPAPTSEMVPVISSMYPIALTRAEMSNGAPQELEKKSIHLPEKSVPSERGLSPNNSGHDSTDTDSNHEERQNHIYQQNHMVLSRARNGMPLLKEVPRSYELLKPPPICPRDSVKVINKEGEVMDVYRCDHCRVLFLDYVMFTIHMGCHGFRDPFECNMCGYRSHDRYEFSSHIARGEHRALLK.

Residues 1 to 19 (MEDIQTNAELKSTQEQSVP) are compositionally biased toward polar residues. The interval 1 to 86 (MEDIQTNAEL…MGNAEEPEIP (86 aa)) is disordered. 2 positions are modified to phosphoserine: Ser-22 and Ser-42. Basic and acidic residues predominate over residues 56–72 (DSMKVKDEYSERDENVL). Residues Lys-61, Lys-73, and Lys-100 each participate in a glycyl lysine isopeptide (Lys-Gly) (interchain with G-Cter in SUMO2) cross-link. 3 C2H2-type zinc fingers span residues 118 to 140 (MNCD…KRSH), 146 to 168 (FQCN…IKLH), and 174 to 196 (FKCH…LRTH). The C2H2-type 4; atypical zinc finger occupies 202–224 (YKCEFCGRSYKQRSSLEEHKERC). Lys-245 participates in a covalent cross-link: Glycyl lysine isopeptide (Lys-Gly) (interchain with G-Cter in SUMO2). Residue Thr-326 is modified to Phosphothreonine. Residues 364–394 (IHLPEKSVPSERGLSPNNSGHDSTDTDSNHE) form a disordered region. Ser-378 is modified (phosphoserine). Residues 385–394 (DSTDTDSNHE) show a composition bias toward basic and acidic residues. The C2H2-type 5 zinc-finger motif lies at 452-474 (YRCDHCRVLFLDYVMFTIHMGCH). The tract at residues 452 to 504 (YRCDHCRVLFLDYVMFTIHMGCHGFRDPFECNMCGYRSHDRYEFSSHIARGEH) is mediates homodimerization and heterodimerization. The C2H2-type 6; atypical zinc-finger motif lies at 480–504 (FECNMCGYRSHDRYEFSSHIARGEH).

It belongs to the Ikaros C2H2-type zinc-finger protein family. Homodimer. Heterodimer with other IKAROS family members. Interacts with IKZF4 and IKZF5. Interacts with IKZF1. Interacts with HRAS. Interacts with FOXP3; this interaction may be required for silencing target genes and regulating the suppressive activity of FOXP3-positive regulatory T-cells (Treg). Interacts with BCL21L isoform Bcl-X(L); this interaction blocks the anti-apoptotic role of BCL21L. Associates with histone deacetylase complexes containing HDAC1, MTA2 and SIN3A. In terms of processing, phosphorylation on tyrosine residues induced by IL2 is required for dissociation from HRAS and nuclear translocation of IKZF3 in T-cells. Phosphorylation on tyrosine residues induced by IL4 is required for dissociation from Bcl-X(L) in T-cells. As to expression, expressed most strongly in peripheral blood leukocytes, the spleen, and the thymus.

The protein resides in the nucleus. The protein localises to the cytoplasm. Transcription factor that plays an important role in the regulation of lymphocyte differentiation. Plays an essential role in regulation of B-cell differentiation, proliferation and maturation to an effector state. Involved in regulating BCL2 expression and controlling apoptosis in T-cells in an IL2-dependent manner. This chain is Zinc finger protein Aiolos (IKZF3), found in Homo sapiens (Human).